The sequence spans 75 residues: MKKQNLIHAEGLVTESLPNGMFRVLTDNGCQILTHISGRIRRNSVRILPGDRVKVELSAYDLTKGRIIYRLSNKS.

An S1-like domain is found at 1-72 (MKKQNLIHAE…TKGRIIYRLS (72 aa)).

It belongs to the IF-1 family. Component of the 30S ribosomal translation pre-initiation complex which assembles on the 30S ribosome in the order IF-2 and IF-3, IF-1 and N-formylmethionyl-tRNA(fMet); mRNA recruitment can occur at any time during PIC assembly.

The protein resides in the plastid. The protein localises to the chloroplast. Functionally, one of the essential components for the initiation of protein synthesis. Stabilizes the binding of IF-2 and IF-3 on the 30S subunit to which N-formylmethionyl-tRNA(fMet) subsequently binds. Helps modulate mRNA selection, yielding the 30S pre-initiation complex (PIC). Upon addition of the 50S ribosomal subunit IF-1, IF-2 and IF-3 are released leaving the mature 70S translation initiation complex. This chain is Translation initiation factor IF-1, chloroplastic, found in Pinus koraiensis (Korean pine).